A 455-amino-acid polypeptide reads, in one-letter code: Oxidative stress induced growth inhibitor homolog osgn-1 (455 aa).

It belongs to the OKL38 family. It depends on NADPH as a cofactor.

Its subcellular location is the midbody. Monooxygenase catalytic activity. Involved in regulation of cytokinesis; promotes rho-1/RhoA activity, probably acting locally at the midbody in late cytokinesis. Monooxygenase activity is required to stabilize structures between primordial germ cells (PGCs), termed intercellular bridges. Dispensable for fertility. The protein is Oxidative stress induced growth inhibitor homolog osgn-1 of Caenorhabditis elegans.